The chain runs to 437 residues: MQLPRWWELGDPCAWTGQGRGTRRMSPATTGTFLLTVYSIFSKVHSDRNVYPSAGVLFVHVLEREYFKGEFPPYPKPGEISNDPITFNTNLMGYPDRPGWLRYIQRTPYSDGVLYGSPTAENVGKPTIIEITAYNRRTFETARHNLIINIMSAEDFPLPYQAEFFIKNMNVEEMLASEVLGDFLGAVKNVWQPERLNAINITSALDRGGRVPLPINDLKEGVYVMVGADVPFSSCLREVENPQNQLRCSQEMEPVITCDKKFRTQFYIDWCKISLVDKTKQVSTYQEVIRGEGILPDGGEYKPPSDSLKSRDYYTDFLITLAVPSAVALVLFLILAYIMCCRREGVEKRNMQTPDIQLVHHSAIQKSTKELRDMSKNREIAWPLSTLPVFHPVTGEIIPPLHTDNYDSTNMPLMQTQQNLPHQTQIPQQQTTGKWYP.

At 1–317 (MQLPRWWELG…LKSRDYYTDF (317 aa)) the chain is on the extracellular side. An N-linked (GlcNAc...) asparagine glycan is attached at Asn200. Residues 318-338 (LITLAVPSAVALVLFLILAYI) form a helical membrane-spanning segment. Topologically, residues 339–437 (MCCRREGVEK…QQQTTGKWYP (99 aa)) are cytoplasmic.

The protein belongs to the sarcoglycan alpha/epsilon family. In terms of processing, N-glycosylated. Ubiquitinated, leading to its degradation by the proteasome. In terms of tissue distribution, ubiquitous.

It localises to the cell membrane. It is found in the sarcolemma. The protein localises to the cytoplasm. The protein resides in the cytoskeleton. Its subcellular location is the cell projection. It localises to the dendrite. It is found in the golgi apparatus. Its function is as follows. Component of the sarcoglycan complex, a subcomplex of the dystrophin-glycoprotein complex which forms a link between the F-actin cytoskeleton and the extracellular matrix. In Homo sapiens (Human), this protein is Epsilon-sarcoglycan (SGCE).